The primary structure comprises 286 residues: Toxin zeta (286 aa).

39-46 (GQPGSGKT) contributes to the ATP binding site. Residues 249–286 (MVQNQHQETPEFKAIQQKMESLQPPTPPIPKTPKLPGI) are disordered. Over residues 272-286 (PPTPPIPKTPKLPGI) the composition is skewed to pro residues.

Belongs to the zeta toxin family. In the presence of the epsilon antitoxin, forms an inactive PezA(2)PezT(2) heterotetramer.

It catalyses the reaction UDP-N-acetyl-alpha-D-glucosamine + ATP = UDP-N-acetyl-alpha-D-glucosamine 3'-phosphate + ADP + H(+). Toxic component of a type II toxin-antitoxin (TA) system. Phosphorylates UDP-N-acetyl-D-glucosamine (UNAG) on the 3'-hydroxyl group of the N-acetyl-D-glucosamine moiety, yielding UNAG-3P. UNAG-3P inhibits MurA, the first committed step in cell wall synthesis, which is then blocked. Phosphorylation is inhibited by cognate epsilon antitoxin. Part of a postsegregational killing (PSK) system involved in the killing of plasmid-free cells. The zeta toxin induces programmed cell death. In Enterococcus hirae, this protein is Toxin zeta.